The chain runs to 78 residues: Gas vesicle protein A (78 aa).

This sequence belongs to the gas vesicle GvpA family. The gas vesicle shell is 2 nm thick and consists of a single layer of this protein. It forms helical ribs nearly perpendicular to the long axis of the vesicle.

Its subcellular location is the gas vesicle shell. Its function is as follows. Gas vesicles are hollow, gas filled proteinaceous nanostructures found in some microorganisms. During planktonic growth they allow positioning of the organism at a favorable depth for light or nutrient acquisition. GvpA forms the protein shell. The sequence is that of Gas vesicle protein A from Halorubrum vacuolatum (Natronobacterium vacuolatum).